The following is a 285-amino-acid chain: Energy-coupling factor transporter ATP-binding protein EcfA1 (285 aa).

In terms of domain architecture, ABC transporter spans 9-246 (VTVEHLSFTY…VSLIKNAGLD (238 aa)). 43–50 (GHNGSGKS) is an ATP binding site.

It belongs to the ABC transporter superfamily. Energy-coupling factor EcfA family. In terms of assembly, forms a stable energy-coupling factor (ECF) transporter complex composed of 2 membrane-embedded substrate-binding proteins (S component), 2 ATP-binding proteins (A component) and 2 transmembrane proteins (T component).

Its subcellular location is the cell membrane. ATP-binding (A) component of a common energy-coupling factor (ECF) ABC-transporter complex. Unlike classic ABC transporters this ECF transporter provides the energy necessary to transport a number of different substrates. This chain is Energy-coupling factor transporter ATP-binding protein EcfA1, found in Lactobacillus gasseri (strain ATCC 33323 / DSM 20243 / BCRC 14619 / CIP 102991 / JCM 1131 / KCTC 3163 / NCIMB 11718 / NCTC 13722 / AM63).